The chain runs to 342 residues: Methyltransferase ungE' (342 aa).

Belongs to the methyltransferase superfamily.

It functions in the pathway secondary metabolite biosynthesis. Its function is as follows. Methyltransferase; part of the gene cluster that mediates the biosynthesis of the unguisins, gamma-aminobutyric acid (GABA)-containing fungal cyclic heptapeptides with the amino acid sequence cyclo-(D-Ala1-D-Val2-L-Leu3-beta-MePhe4-D-Ala5-D-Trp6-GABA7) for unguisin H and cyclo-(D-Ala1-D-Ala2-L-Leu3-beta-MePhe4-D-Ala5-D-Trp6-GABA7) for unguisin I. Within the pathway, the methyltransferase ungE' is probably involved in the synthesis of the (2R,3R)-beta-methylphenylalanine residue incorporated by the module 4 of the nonribosomal peptide synthetase (NRPS) ungA'. The alanine racemase ungC' catalyzes the interconversion of L-alanine and D-alanine, providing the D-alanine which is accepted by the first adenylation domain of ungA'. UngA' is the main enzyme within the cluster which condenses the 7 residues using its respective 7 modules. The terminal condensation domain (Ct) is involved in cyclization with D-alanine and thereby releasing of unguisins H and I. Finally, the hydrolase ungD' catalyzes the hydrolysis between the D-tryptophan and GABA residues of unguisins H and I to produce the corresponding linear peptides. This chain is Methyltransferase ungE', found in Aspergillus campestris (strain IBT 28561).